The chain runs to 811 residues: MVIESEINDKKRGLESSSPTINDPKKVKVESPSSGKEDGEVDEVTSSPASRETSSSKLMSPSKNQSSSSSRSYHDSNNGYRRKDERYSSSRSYDRNYRDRDISRDGDRERDRDRERDRDRDRDRDRDRDRDRDRERDRDRDRDRDRDRDRDRDRDRERERERDRDRNSQERGSRNSHERDYRDNRDYSRDSRDNMDSRDNKNGSRQSINNNTLSYEKQADRKDEVRVKDNISVNDDKTNHGENLTNESITATSTNEPTKPAVIIEEDEETKTKRILEENRLQRQLIMEKYNKEQPQPITSSLSTTEKEQSNTNTNSNSTPVATTTTSILAKSPSNLENQIEEEDESIIIEWRKDQNSENSSAFNDNNNDESCSSEEDLKKRGKIKEEDIKAKDKPITTTTTTTTINNVSIKLPPKPEPIKAKTSAPVFDMFSDSPSDETDESNRDLNETNGGGVMVDANIVVNPSINLSDNWDDADGYYKFRVGEIMDKYQIFSPIGSGVFSTVVSAKETKTNEDVVIKIIRNRPSMHRSGLKEIEILQKISNTPTSSNQKSHCIQMKDHFNYRNHLCIVFEPMSMSLHQLIKKYGKDIGLSLNAVRVYAKQLFLALKHIKNSKILHADIKPDNIVVNEAKNTIKIVDFGSAGEIHESEITPYLVSRFYRAPEIILGHKYDYSIDVWSVGCCLAEFFTGKFLFPGKTNNDMIRLFMEYRGAFSKKMLKKSEFVSNHFNENLVFMKQEIDNIEKTVRKVPHDITKPTKDILQFLLPKNVSIPDQDMKKLIQLKDLIEKCTILDPEKRITPFEALNHEFLKPF.

Disordered stretches follow at residues 1–257 (MVIE…TNEP), 288–341 (EKYN…NQIE), 353–379 (KDQN…EDLK), and 408–452 (VSIK…TNGG). The segment covering 46 to 71 (SSPASRETSSSKLMSPSKNQSSSSSR) has biased composition (low complexity). A compositionally biased stretch (basic and acidic residues) spans 81–202 (RRKDERYSSS…DNMDSRDNKN (122 aa)). A compositionally biased stretch (polar residues) spans 203 to 215 (GSRQSINNNTLSY). Residues 217-240 (KQADRKDEVRVKDNISVNDDKTNH) show a composition bias toward basic and acidic residues. Composition is skewed to polar residues over residues 241-257 (GENL…TNEP) and 293-302 (EQPQPITSSL). Residues 310–327 (SNTNTNSNSTPVATTTTS) are compositionally biased toward low complexity. A Protein kinase domain is found at 490–808 (YQIFSPIGSG…PFEALNHEFL (319 aa)). ATP is bound by residues 496 to 504 (IGSGVFSTV) and K519. Catalysis depends on D619, which acts as the Proton acceptor.

It belongs to the protein kinase superfamily. CMGC Ser/Thr protein kinase family. In terms of processing, phosphorylated. Autophosphorylated; phosphorylation inhibits interaction with its targets.

The protein resides in the nucleus. The protein localises to the chromosome. It localises to the centromere. Its subcellular location is the kinetochore. It catalyses the reaction L-seryl-[protein] + ATP = O-phospho-L-seryl-[protein] + ADP + H(+). The catalysed reaction is L-threonyl-[protein] + ATP = O-phospho-L-threonyl-[protein] + ADP + H(+). Functionally, serine/threonine kinase involved in spliceosomal assembly as well as mitosis and signaling regulation. In Dictyostelium discoideum (Social amoeba), this protein is Serine/threonine-protein kinase prpf4B (prp4k).